The sequence spans 487 residues: NADH-quinone oxidoreductase subunit N (487 aa).

A run of 14 helical transmembrane segments spans residues Leu8–Ile28, Phe35–Val55, Gly78–Tyr98, Glu104–His124, Leu125–Tyr145, Tyr159–Ala179, Ile203–Phe223, Pro235–Met255, Leu271–Gln291, Leu297–Gln317, Ile328–Leu348, Ala376–Gly396, Leu409–Leu428, and Ala451–Ile471.

Belongs to the complex I subunit 2 family. NDH-1 is composed of 13 different subunits. Subunits NuoA, H, J, K, L, M, N constitute the membrane sector of the complex.

Its subcellular location is the cell inner membrane. It catalyses the reaction a quinone + NADH + 5 H(+)(in) = a quinol + NAD(+) + 4 H(+)(out). In terms of biological role, NDH-1 shuttles electrons from NADH, via FMN and iron-sulfur (Fe-S) centers, to quinones in the respiratory chain. The immediate electron acceptor for the enzyme in this species is believed to be ubiquinone. Couples the redox reaction to proton translocation (for every two electrons transferred, four hydrogen ions are translocated across the cytoplasmic membrane), and thus conserves the redox energy in a proton gradient. The protein is NADH-quinone oxidoreductase subunit N of Yersinia pestis bv. Antiqua (strain Angola).